A 350-amino-acid chain; its full sequence is Protein RecA (350 aa).

ATP is bound at residue 67-74 (GPESSGKT).

It belongs to the RecA family.

The protein localises to the cytoplasm. Functionally, can catalyze the hydrolysis of ATP in the presence of single-stranded DNA, the ATP-dependent uptake of single-stranded DNA by duplex DNA, and the ATP-dependent hybridization of homologous single-stranded DNAs. It interacts with LexA causing its activation and leading to its autocatalytic cleavage. The chain is Protein RecA from Mycobacterium avium (strain 104).